We begin with the raw amino-acid sequence, 1969 residues long: Cytadherence high molecular weight protein 1 (1969 aa).

Residues 148–166 (YYDENEEWVWTGYFDEDNK) form an HAT 1 repeat. The tract at residues 174 to 244 (KPAEVEALEE…QPESEQEGSG (71 aa)) is disordered. Acidic residues-rich tracts occupy residues 179 to 207 (EALE…EVVE) and 214 to 242 (QPEE…EQEG). HAT repeat units follow at residues 258 to 278 (YYDE…NNFV), 300 to 331 (AQQE…VEGY), and 333 to 353 (YYDE…NNFV). A disordered region spans residues 294-319 (QVEEYSAQQEQVQEEYEQQPEQEGSG). The disordered stretch occupies residues 365–393 (VSEEQYSESVSEEQEPASEEQVAEEPAQV). Positions 374-387 (VSEEQEPASEEQVA) are enriched in acidic residues. HAT repeat units follow at residues 477–497 (YYDE…GMFI) and 959–997 (LTLV…DQNN). The stretch at 1000 to 1027 (SDKDSKTQKVDQLIEEFNKQEAIKKTEE) forms a coiled coil. One copy of the HAT 7 repeat lies at 1029–1067 (EAKKASEPFYNKYIGNKQFGYYNDKNVWIWNGYFDENDQ). Coiled-coil stretches lie at residues 1082–1190 (IEDE…FDNF), 1547–1621 (SVNQ…LALT), and 1758–1790 (NRGD…NKKV).

It localises to the cell projection. The protein resides in the attachment organelle membrane. Component of the cytoskeleton-like structure which stabilizes the shape of the wall-less Mycoplasma. This cytoskeleton-like network of accessory proteins containing HMW proteins 1 to 5 allows the proper anchoring of cytadhesin proteins in the mycoplasmal membrane at the attachment organelle. The polypeptide is Cytadherence high molecular weight protein 1 (hlp1) (Mycoplasmoides gallisepticum (strain R(low / passage 15 / clone 2)) (Mycoplasma gallisepticum)).